The chain runs to 240 residues: MEDLLNNAKQHLCMRNPKLIRIGLRQVESIVYHVAKPSHDDKIPREIFLKLQDSPLYNSTTPCIYALDSLLEYQQNEEAYEKNFQFIQKLIDDLLHVIEGLVLIHPKSQTLFEDKATLRLFIHLLQPSQPSMLQVAAMKTLVCIMADRPLAIRLFEQINGLQQICVVFKHKQTSQDTRFQILEFFYFYLSPEPYSIDVIAYRKTRTEKQAYLSKYLSNVQGLRDDLDKFQPFGKLDETFD.

In terms of assembly, interacts with sid1.

The protein resides in the cytoplasm. It is found in the cytoskeleton. The protein localises to the microtubule organizing center. Its subcellular location is the spindle pole body. Functionally, has a role in the septation initiation network (SIN) required for cytokinesis. This Schizosaccharomyces pombe (strain 972 / ATCC 24843) (Fission yeast) protein is Cell division control protein 14 (cdc14).